The following is a 297-amino-acid chain: 33 kDa chaperonin (297 aa).

Disulfide bonds link C232/C234 and C266/C269.

Belongs to the HSP33 family. Under oxidizing conditions two disulfide bonds are formed involving the reactive cysteines. Under reducing conditions zinc is bound to the reactive cysteines and the protein is inactive.

Its subcellular location is the cytoplasm. Functionally, redox regulated molecular chaperone. Protects both thermally unfolding and oxidatively damaged proteins from irreversible aggregation. Plays an important role in the bacterial defense system toward oxidative stress. The protein is 33 kDa chaperonin of Pseudomonas aeruginosa (strain LESB58).